Here is a 113-residue protein sequence, read N- to C-terminus: uncharacterized protein (113 aa).

Residues 4-26 (VLFKIAVALLYLLSFFLHRLHLR) form a helical membrane-spanning segment. The segment at 32–74 (RRRRRRHHRRHHRRHHHHRRRRRRRRRRRRRHHRHHHHRHRRR) is disordered.

It localises to the membrane. This is an uncharacterized protein from Saccharomyces cerevisiae (strain ATCC 204508 / S288c) (Baker's yeast).